A 322-amino-acid chain; its full sequence is tRNA-dihydrouridine synthase B (322 aa).

FMN-binding positions include 16–18 (PMA) and glutamine 70. The active-site Proton donor is the cysteine 100. FMN contacts are provided by residues lysine 139, 200 to 202 (NGD), and 224 to 225 (GR).

Belongs to the Dus family. DusB subfamily. It depends on FMN as a cofactor.

It carries out the reaction a 5,6-dihydrouridine in tRNA + NAD(+) = a uridine in tRNA + NADH + H(+). The enzyme catalyses a 5,6-dihydrouridine in tRNA + NADP(+) = a uridine in tRNA + NADPH + H(+). Its function is as follows. Catalyzes the synthesis of 5,6-dihydrouridine (D), a modified base found in the D-loop of most tRNAs, via the reduction of the C5-C6 double bond in target uridines. This is tRNA-dihydrouridine synthase B from Vibrio vulnificus (strain CMCP6).